We begin with the raw amino-acid sequence, 261 residues long: Undecaprenyl-diphosphatase (261 aa).

The next 6 membrane-spanning stretches (helical) occupy residues asparagine 39–phenylalanine 59, leucine 76–phenylalanine 96, leucine 99–leucine 119, alanine 173–leucine 193, isoleucine 206–valine 226, and leucine 238–alanine 258.

The protein belongs to the UppP family.

It localises to the cell membrane. It carries out the reaction di-trans,octa-cis-undecaprenyl diphosphate + H2O = di-trans,octa-cis-undecaprenyl phosphate + phosphate + H(+). Its function is as follows. Catalyzes the dephosphorylation of undecaprenyl diphosphate (UPP). Confers resistance to bacitracin. The protein is Undecaprenyl-diphosphatase of Carboxydothermus hydrogenoformans (strain ATCC BAA-161 / DSM 6008 / Z-2901).